Consider the following 346-residue polypeptide: FMRFamide-related peptides type HF-1 (346 aa).

The signal sequence occupies residues 1 to 19 (MTSLCLTIAPAVLSLICLS). A propeptide spanning residues 20–45 (SYGWAEDNNGIHTLDDGDNDPFFRHN) is cleaved from the precursor. Phe51 bears the Phenylalanine amide mark. Positions 54 to 94 (AFVPLWDNADDSLVRKNLLTHWSEFPLSPALSSSDVFSRNS) are excised as a propeptide. Phe100 carries the post-translational modification Phenylalanine amide. Positions 103-109 (SYPPYQD) are excised as a propeptide. A Phenylalanine amide modification is found at Phe115. A propeptide spanning residues 118–203 (SHQPDIDEYL…EILSNEDDLE (86 aa)) is cleaved from the precursor. Residues 137 to 185 (YRKRRSEDGDSKEDGLNRVARSADANQQSKNTQSNKFGKDLQKRETKKE) are disordered. The span at 141 to 152 (RSEDGDSKEDGL) shows a compositional bias: basic and acidic residues. Polar residues predominate over residues 160-172 (DANQQSKNTQSNK). Residues 173 to 185 (FGKDLQKRETKKE) are compositionally biased toward basic and acidic residues. Phenylalanine amide is present on residues Phe209 and Phe216. Residues 219–226 (GDEDESYD) constitute a propeptide that is removed on maturation. A Phenylalanine amide modification is found at Phe232. The propeptide occupies 235 to 243 (SLRHDQEFE). Phenylalanine amide occurs at positions 249 and 256. Residues 259-267 (GDEDDAREE) constitute a propeptide that is removed on maturation. Position 273 is a phenylalanine amide (Phe273). The propeptide occupies 276-283 (SSNEDEDI). Phe290 is subject to Phenylalanine amide. Positions 293–301 (SGNEDGDVD) are excised as a propeptide. Residues Phe307 and Phe314 each carry the phenylalanine amide modification. A propeptide spanning residues 317–325 (SEKEDGDVD) is cleaved from the precursor. Phenylalanine amide occurs at positions 331 and 338. Positions 341-346 (GDSETS) are excised as a propeptide.

This sequence belongs to the FARP (FMRFamide related peptide) family. Central nervous system.

It localises to the secreted. Functionally, can function as both cardioregulatory hormones and transmitters and may regulate cardiovascular function. The chain is FMRFamide-related peptides type HF-1 from Cornu aspersum (Brown garden snail).